The following is a 377-amino-acid chain: Nitric oxide reductase FlRd-NAD(+) reductase (377 aa).

This sequence belongs to the FAD-dependent oxidoreductase family. The cofactor is FAD.

Its subcellular location is the cytoplasm. It catalyses the reaction 2 reduced [nitric oxide reductase rubredoxin domain] + NAD(+) + H(+) = 2 oxidized [nitric oxide reductase rubredoxin domain] + NADH. It functions in the pathway nitrogen metabolism; nitric oxide reduction. In terms of biological role, one of at least two accessory proteins for anaerobic nitric oxide (NO) reductase. Reduces the rubredoxin moiety of NO reductase. This chain is Nitric oxide reductase FlRd-NAD(+) reductase, found in Escherichia coli O9:H4 (strain HS).